A 245-amino-acid polypeptide reads, in one-letter code: tRNA pseudouridine synthase A (245 aa).

Catalysis depends on Asp52, which acts as the Nucleophile. Substrate is bound at residue Tyr112.

It belongs to the tRNA pseudouridine synthase TruA family. Homodimer.

The enzyme catalyses uridine(38/39/40) in tRNA = pseudouridine(38/39/40) in tRNA. Formation of pseudouridine at positions 38, 39 and 40 in the anticodon stem and loop of transfer RNAs. In Dictyoglomus thermophilum (strain ATCC 35947 / DSM 3960 / H-6-12), this protein is tRNA pseudouridine synthase A.